The sequence spans 406 residues: Eukaryotic initiation factor 4A-I (406 aa).

The disordered stretch occupies residues 1 to 21 (MSASQDSRSRDNGPDGMEPEG). S2 bears the N-acetylserine mark. A Phosphoserine modification is found at S4. The Q motif motif lies at 32 to 60 (DSFDDMNLSESLLRGIYAYGFEKPSAIQQ). In terms of domain architecture, Helicase ATP-binding spans 63 to 234 (ILPCIKGYDV…KKFMRDPIRI (172 aa)). 76-83 (AQSGTGKT) lines the ATP pocket. Position 118 is an N6-acetyllysine (K118). K146 participates in a covalent cross-link: Glycyl lysine isopeptide (Lys-Gly) (interchain with G-Cter in SUMO2). T158 is modified (phosphothreonine). At K174 the chain carries N6-acetyllysine. The DEAD box motif lies at 182–185 (DEAD). K193 carries the N6-acetyllysine modification. K225 is covalently cross-linked (Glycyl lysine isopeptide (Lys-Gly) (interchain with G-Cter in SUMO2)). K238 bears the N6-acetyllysine; alternate mark. Residue K238 forms a Glycyl lysine isopeptide (Lys-Gly) (interchain with G-Cter in SUMO2); alternate linkage. Residues 245-406 (GIRQFYINVE…EMPLNVADLI (162 aa)) enclose the Helicase C-terminal domain. Residues K309, K369, and K381 each participate in a glycyl lysine isopeptide (Lys-Gly) (interchain with G-Cter in SUMO2) cross-link.

Belongs to the DEAD box helicase family. eIF4A subfamily. In terms of assembly, eIF4F is a multi-subunit complex, the composition of which varies with external and internal environmental conditions. It is composed of at least EIF4A, EIF4E and EIF4G1/EIF4G3. Interacts with PAIP1, EIF4E and UPF2. Found in a complex with XPO7, EIF4A1, ARHGAP1, VPS26A, VPS29, VPS35 and SFN. May interact with NOM1. Interacts with PDCD4; this interferes with the interaction between EIF4A and EIF4G. Interacts with RBM4. Interacts with DDX3X in an RNA-independent manner. Interacts with PKP1 (via N-terminus); the interaction promotes EIF4A1 recruitment to the cap-dependent translation complex and EIF4A1 ATPase activity.

It is found in the cytoplasm. It localises to the perinuclear region. The protein localises to the cell membrane. Its subcellular location is the stress granule. The enzyme catalyses ATP + H2O = ADP + phosphate + H(+). In terms of biological role, ATP-dependent RNA helicase which is a subunit of the eIF4F complex involved in cap recognition and is required for mRNA binding to ribosome. In the current model of translation initiation, eIF4A unwinds RNA secondary structures in the 5'-UTR of mRNAs which is necessary to allow efficient binding of the small ribosomal subunit, and subsequent scanning for the initiator codon. As a result, promotes cell proliferation and growth. The polypeptide is Eukaryotic initiation factor 4A-I (EIF4A1) (Bos taurus (Bovine)).